The primary structure comprises 31 residues: Cyclotide Hyfl-A (31 aa).

A cross-link (cyclopeptide (Ser-Asn)) is located at residues 1-31; it reads SISCGESCVYIPCTVTALVGCTCKDKVCYLN. Disulfide bonds link C4–C21, C8–C23, and C13–C28.

The protein belongs to the cyclotide family. Bracelet subfamily. This is a cyclic peptide.

Its function is as follows. Probably participates in a plant defense mechanism. The chain is Cyclotide Hyfl-A from Hybanthus floribundus (Greenviolet).